We begin with the raw amino-acid sequence, 258 residues long: Tryptophan synthase alpha chain (258 aa).

Residues Glu52 and Asp63 each act as proton acceptor in the active site.

It belongs to the TrpA family. In terms of assembly, tetramer of two alpha and two beta chains.

The catalysed reaction is (1S,2R)-1-C-(indol-3-yl)glycerol 3-phosphate + L-serine = D-glyceraldehyde 3-phosphate + L-tryptophan + H2O. It functions in the pathway amino-acid biosynthesis; L-tryptophan biosynthesis; L-tryptophan from chorismate: step 5/5. Its function is as follows. The alpha subunit is responsible for the aldol cleavage of indoleglycerol phosphate to indole and glyceraldehyde 3-phosphate. The sequence is that of Tryptophan synthase alpha chain from Streptococcus pneumoniae serotype 19F (strain G54).